The primary structure comprises 428 residues: Tryptophan synthase beta chain (428 aa).

Lys-100 is modified (N6-(pyridoxal phosphate)lysine).

It belongs to the TrpB family. As to quaternary structure, tetramer of two alpha and two beta chains. The cofactor is pyridoxal 5'-phosphate.

The catalysed reaction is (1S,2R)-1-C-(indol-3-yl)glycerol 3-phosphate + L-serine = D-glyceraldehyde 3-phosphate + L-tryptophan + H2O. Its pathway is amino-acid biosynthesis; L-tryptophan biosynthesis; L-tryptophan from chorismate: step 5/5. Functionally, the beta subunit is responsible for the synthesis of L-tryptophan from indole and L-serine. This Streptomyces avermitilis (strain ATCC 31267 / DSM 46492 / JCM 5070 / NBRC 14893 / NCIMB 12804 / NRRL 8165 / MA-4680) protein is Tryptophan synthase beta chain.